A 445-amino-acid polypeptide reads, in one-letter code: Tubulin beta chain (445 aa).

The short motif at methionine 1–isoleucine 4 is the MREI motif element. Position 11 (glutamine 11) interacts with GTP. Serine 40 bears the Phosphoserine mark. Lysine 58 carries the post-translational modification N6-acetyllysine; alternate. Lysine 58 bears the N6-succinyllysine; alternate mark. Residue lysine 58 forms a Glycyl lysine isopeptide (Lys-Gly) (interchain with G-Cter in ubiquitin); alternate linkage. 5 residues coordinate GTP: glutamate 69, serine 138, glycine 142, threonine 143, and glycine 144. Mg(2+) is bound at residue glutamate 69. Phosphoserine; by CDK1 is present on serine 172. GTP is bound by residues asparagine 204 and asparagine 226. A phosphothreonine mark is found at threonine 285 and threonine 290. Arginine 318 is subject to Omega-N-methylarginine. Lysine 324 is covalently cross-linked (Glycyl lysine isopeptide (Lys-Gly) (interchain with G-Cter in ubiquitin)). The segment at glutamine 424–alanine 445 is disordered. A compositionally biased stretch (acidic residues) spans threonine 429–alanine 445. Residue glutamate 438 is modified to 5-glutamyl polyglutamate.

It belongs to the tubulin family. Dimer of alpha and beta chains. A typical microtubule is a hollow water-filled tube with an outer diameter of 25 nm and an inner diameter of 15 nM. Alpha-beta heterodimers associate head-to-tail to form protofilaments running lengthwise along the microtubule wall with the beta-tubulin subunit facing the microtubule plus end conferring a structural polarity. Microtubules usually have 13 protofilaments but different protofilament numbers can be found in some organisms and specialized cells. Interacts with NCKAP5L. It depends on Mg(2+) as a cofactor. Post-translationally, some glutamate residues at the C-terminus are polyglycylated, resulting in polyglycine chains on the gamma-carboxyl group. Glycylation is mainly limited to tubulin incorporated into axonemes (cilia and flagella) whereas glutamylation is prevalent in neuronal cells, centrioles, axonemes, and the mitotic spindle. Both modifications can coexist on the same protein on adjacent residues, and lowering polyglycylation levels increases polyglutamylation, and reciprocally. Cilia and flagella glycylation is required for their stability and maintenance. Flagella glycylation controls sperm motility. Some glutamate residues at the C-terminus are polyglutamylated, resulting in polyglutamate chains on the gamma-carboxyl group. Polyglutamylation plays a key role in microtubule severing by spastin (SPAST). SPAST preferentially recognizes and acts on microtubules decorated with short polyglutamate tails: severing activity by SPAST increases as the number of glutamates per tubulin rises from one to eight, but decreases beyond this glutamylation threshold. In terms of processing, phosphorylated on Ser-172 by CDK1 during the cell cycle, from metaphase to telophase, but not in interphase. This phosphorylation inhibits tubulin incorporation into microtubules.

The protein localises to the cytoplasm. It localises to the cytoskeleton. Tubulin is the major constituent of microtubules, a cylinder consisting of laterally associated linear protofilaments composed of alpha- and beta-tubulin heterodimers. Microtubules grow by the addition of GTP-tubulin dimers to the microtubule end, where a stabilizing cap forms. Below the cap, tubulin dimers are in GDP-bound state, owing to GTPase activity of alpha-tubulin. The chain is Tubulin beta chain from Sus scrofa (Pig).